A 54-amino-acid chain; its full sequence is Ribulose bisphosphate carboxylase large chain (54 aa).

Positions 1–2 (MS) are excised as a propeptide. P3 carries the post-translational modification N-acetylproline. An N6,N6,N6-trimethyllysine modification is found at K14.

This sequence belongs to the RuBisCO large chain family. Type I subfamily. As to quaternary structure, heterohexadecamer of 8 large chains and 8 small chains.

The protein resides in the plastid. The protein localises to the chloroplast. It catalyses the reaction 2 (2R)-3-phosphoglycerate + 2 H(+) = D-ribulose 1,5-bisphosphate + CO2 + H2O. The enzyme catalyses D-ribulose 1,5-bisphosphate + O2 = 2-phosphoglycolate + (2R)-3-phosphoglycerate + 2 H(+). Functionally, ruBisCO catalyzes two reactions: the carboxylation of D-ribulose 1,5-bisphosphate, the primary event in carbon dioxide fixation, as well as the oxidative fragmentation of the pentose substrate in the photorespiration process. Both reactions occur simultaneously and in competition at the same active site. This is Ribulose bisphosphate carboxylase large chain (rbcL) from Rhamnus cathartica (Common buckthorn).